The following is a 122-amino-acid chain: Large ribosomal subunit protein uL14c (122 aa).

Belongs to the universal ribosomal protein uL14 family. Part of the 50S ribosomal subunit.

The protein localises to the plastid. It is found in the chloroplast. Functionally, binds to 23S rRNA. This is Large ribosomal subunit protein uL14c from Lemna minor (Common duckweed).